The primary structure comprises 319 residues: Myoblast determination protein 1 (319 aa).

A Peptide (Met-Gly) (interchain with G-Cter in ubiquitin) cross-link involves residue Met-1. Lys-104 carries the N6-methyllysine; by EHMT2 modification. Positions 109-160 constitute a bHLH domain; it reads DRRKAATMRERRRLSKVNEAFETLKRCTSSNPNQRLPKVEILRNAIRYIEGL. Disordered stretches follow at residues 174–221 and 266–319; these read AAAA…SGAR and APAL…YQVL. 2 stretches are compositionally biased toward polar residues: residues 197–207 and 308–319; these read SDASSPRSNCS and ASANPNPIYQVL.

As to quaternary structure, efficient DNA binding requires dimerization with another bHLH protein. Seems to form active heterodimers with ITF-2. Interacts with SUV39H1. Interacts with DDX5. Interacts with CHD2. Interacts with TSC22D3. Interacts with SETD3. Interacts with P-TEFB complex; promotes the transcriptional activity of MYOD1 through its CDK9-mediated phosphorylation. Interacts with CSRP3. Interacts with NUPR1. Phosphorylated by CDK9. This phosphorylation promotes its function in muscle differentiation. In terms of processing, acetylated by a complex containing EP300 and PCAF. The acetylation is essential to activate target genes. Conversely, its deacetylation by SIRT1 inhibits its function. Post-translationally, ubiquitinated on the N-terminus; which is required for proteasomal degradation. Methylation at Lys-104 by EHMT2/G9a inhibits myogenic activity.

The protein resides in the nucleus. Functionally, acts as a transcriptional activator that promotes transcription of muscle-specific target genes and plays a role in muscle differentiation. Together with MYF5 and MYOG, co-occupies muscle-specific gene promoter core region during myogenesis. Induces fibroblasts to differentiate into myoblasts. Interacts with and is inhibited by the twist protein. This interaction probably involves the basic domains of both proteins. The protein is Myoblast determination protein 1 (MYOD1) of Sus scrofa (Pig).